Here is a 192-residue protein sequence, read N- to C-terminus: Thymidine kinase (192 aa).

ATP is bound by residues 9 to 16 and 85 to 88; these read GAMNSGKT and DEAQ. Glu86 serves as the catalytic Proton acceptor. Zn(2+)-binding residues include Cys143, Cys146, Cys180, and His183.

Belongs to the thymidine kinase family. As to quaternary structure, homotetramer.

It localises to the cytoplasm. It carries out the reaction thymidine + ATP = dTMP + ADP + H(+). The chain is Thymidine kinase from Lactiplantibacillus plantarum (strain ATCC BAA-793 / NCIMB 8826 / WCFS1) (Lactobacillus plantarum).